An 80-amino-acid polypeptide reads, in one-letter code: Clavanin-D (80 aa).

Residues 1 to 19 (MKTTILILLILGLGINAKS) form the signal peptide. Residues 20-29 (LEERKSEEEK) constitute a propeptide that is removed on maturation. Residue Phe52 is modified to Phenylalanine amide. Positions 54-80 (DDQQDNGKFYGHYAEDNGKHWYDTGDQ) are excised as a propeptide.

As to expression, hemocytes and pharyngeal tissues.

The protein resides in the secreted. Functionally, has antimicrobial activity against E.coli, L.monocytogenes and C.albicans. This Styela clava (Sea squirt) protein is Clavanin-D.